The following is a 357-amino-acid chain: Naringenin,2-oxoglutarate 3-dioxygenase (357 aa).

Positions 189-293 (CVDMDQKIVV…RLSIATFQNP (105 aa)) constitute a Fe2OG dioxygenase domain. Fe cation contacts are provided by His216, Asp218, and His274. A 2-oxoglutarate-binding site is contributed by Arg284.

This sequence belongs to the iron/ascorbate-dependent oxidoreductase family. Requires Fe(2+) as cofactor. L-ascorbate is required as a cofactor.

It catalyses the reaction a (2S)-flavan-4-one + 2-oxoglutarate + O2 = a (2R,3R)-dihydroflavonol + succinate + CO2. It functions in the pathway secondary metabolite biosynthesis; flavonoid biosynthesis. Catalyzes the 3-beta-hydroxylation of 2S-flavanones to 2R,3R-dihydroflavonols which are intermediates in the biosynthesis of flavonols, anthocyanidins, catechins and proanthocyanidins in plants. In Matthiola incana (Common stock), this protein is Naringenin,2-oxoglutarate 3-dioxygenase (FHT).